A 94-amino-acid polypeptide reads, in one-letter code: Small ribosomal subunit protein uS19c (94 aa).

The protein belongs to the universal ribosomal protein uS19 family.

It is found in the plastid. Protein S19 forms a complex with S13 that binds strongly to the 16S ribosomal RNA. This chain is Small ribosomal subunit protein uS19c (rps19), found in Epifagus virginiana (Beechdrops).